The following is a 707-amino-acid chain: Choline transporter-like protein 4 (707 aa).

Over 1 to 27 the chain is Cytoplasmic; the sequence is MASEEYGEPAKHDPSFKGPIKKRGCTD. A helical transmembrane segment spans residues 28–48; the sequence is IICCVLFMVFLLGYMVVGILA. At 49-225 the chain is on the extracellular side; the sequence is WLYGDPRQVI…KIFEDFAKSW (177 aa). Asn-62, Asn-140, Asn-176, Asn-191, and Asn-196 each carry an N-linked (GlcNAc...) asparagine glycan. Residues 226–246 form a helical membrane-spanning segment; the sequence is PWIITALVIAMVVSLLFLILL. Over 247 to 249 the chain is Cytoplasmic; sequence RFT. A helical membrane pass occupies residues 250 to 270; that stretch reads AGILVWVLIVGVIGVIGYGIY. Over 271 to 305 the chain is Extracellular; the sequence is HCYMEYDTLNKQGVSVSDVGFTFNLGVYFRVKETW. A helical membrane pass occupies residues 306–326; it reads LAILIVLAVVEAILLLVLLFL. The Cytoplasmic segment spans residues 327-354; that stretch reads RKRILIAIALIKEASKAIGHIMSSLFYP. The chain crosses the membrane as a helical span at residues 355-375; sequence LVTFVLLVVCVAYWGMTALYL. Residues 376–442 lie on the Extracellular side of the membrane; the sequence is ATSGAPIYRI…TNLFNLQIYN (67 aa). Asn-389, Asn-397, and Asn-401 each carry an N-linked (GlcNAc...) asparagine glycan. A helical transmembrane segment spans residues 443–463; that stretch reads VIGFLWCINFVIALGQCVLAG. The Cytoplasmic segment spans residues 464–494; that stretch reads AFASYYWAFHKPKDIPFFPVAESFMRTLRYH. A helical membrane pass occupies residues 495 to 515; sequence TGSLAFGSLILTIVQLIRIIL. Over 516-556 the chain is Extracellular; that stretch reads EYVDHKLKGAQNPCTRFLLCCLKCCFWCLEKFIKFLNRNAY. A helical transmembrane segment spans residues 557–577; the sequence is IMIAVYGKNFCVSAKNAFKLL. Residues 578 to 593 lie on the Cytoplasmic side of the membrane; it reads MRNIVRVVVLDKVTDL. A helical membrane pass occupies residues 594–614; it reads LIFFGKLIVVGGVGVLAFFFF. The Extracellular segment spans residues 615-633; the sequence is SGRIPIPNDSFKSPTLNYY. Asn-622 carries N-linked (GlcNAc...) asparagine glycosylation. The chain crosses the membrane as a helical span at residues 634 to 654; that stretch reads WIPIITVVLGSYMIAHGFFSV. At 655-707 the chain is on the cytoplasmic side; the sequence is YNMCVDTLFLCFLEDLERNDGSQEKPYYMSKSLMSILNKKNRPPKSEEKKKKK.

It belongs to the CTL (choline transporter-like) family.

The protein resides in the membrane. It is found in the apical cell membrane. The catalysed reaction is choline(out) + n H(+)(in) = choline(in) + n H(+)(out). It catalyses the reaction thiamine diphosphate(out) = thiamine diphosphate(in). Its function is as follows. Choline transporter that seems to play a role in the choline-acetylcholine system and is required to the efferent innervation of hair cells in the olivocochlear bundle for the maintenance of physiological function of outer hair cells and the protection of hair cells from acoustic injury. Also described as a thiamine pyrophosphate transporter. Also described as a thiamine pyrophosphate transporter. The protein is Choline transporter-like protein 4 (slc44a4) of Xenopus laevis (African clawed frog).